Consider the following 155-residue polypeptide: NADPH-dependent 7-cyano-7-deazaguanine reductase (155 aa).

Residues 1–20 are compositionally biased toward polar residues; the sequence is MMPNTDVSSLSMLGQQTETA. The tract at residues 1-26 is disordered; the sequence is MMPNTDVSSLSMLGQQTETAKSPEEA. Cys-53 functions as the Thioimide intermediate in the catalytic mechanism. Asp-60 serves as the catalytic Proton donor. Residues 75 to 77 and 94 to 95 contribute to the substrate site; these read VES and HE.

The protein belongs to the GTP cyclohydrolase I family. QueF type 1 subfamily.

It localises to the cytoplasm. It carries out the reaction 7-aminomethyl-7-carbaguanine + 2 NADP(+) = 7-cyano-7-deazaguanine + 2 NADPH + 3 H(+). It functions in the pathway tRNA modification; tRNA-queuosine biosynthesis. Catalyzes the NADPH-dependent reduction of 7-cyano-7-deazaguanine (preQ0) to 7-aminomethyl-7-deazaguanine (preQ1). This Rhizobium etli (strain CIAT 652) protein is NADPH-dependent 7-cyano-7-deazaguanine reductase.